Consider the following 522-residue polypeptide: 2-isopropylmalate synthase (522 aa).

The region spanning Val-5 to His-267 is the Pyruvate carboxyltransferase domain. Asp-14, His-202, His-204, and Asn-238 together coordinate Mn(2+). Positions Val-392–Val-522 are regulatory domain.

Belongs to the alpha-IPM synthase/homocitrate synthase family. LeuA type 1 subfamily. In terms of assembly, homodimer. Mn(2+) is required as a cofactor.

Its subcellular location is the cytoplasm. It catalyses the reaction 3-methyl-2-oxobutanoate + acetyl-CoA + H2O = (2S)-2-isopropylmalate + CoA + H(+). It functions in the pathway amino-acid biosynthesis; L-leucine biosynthesis; L-leucine from 3-methyl-2-oxobutanoate: step 1/4. Its function is as follows. Catalyzes the condensation of the acetyl group of acetyl-CoA with 3-methyl-2-oxobutanoate (2-ketoisovalerate) to form 3-carboxy-3-hydroxy-4-methylpentanoate (2-isopropylmalate). This is 2-isopropylmalate synthase from Shewanella amazonensis (strain ATCC BAA-1098 / SB2B).